The sequence spans 101 residues: Urease subunit beta (101 aa).

It belongs to the urease beta subunit family. Heterotrimer of UreA (gamma), UreB (beta) and UreC (alpha) subunits. Three heterotrimers associate to form the active enzyme.

Its subcellular location is the cytoplasm. The enzyme catalyses urea + 2 H2O + H(+) = hydrogencarbonate + 2 NH4(+). It participates in nitrogen metabolism; urea degradation; CO(2) and NH(3) from urea (urease route): step 1/1. The polypeptide is Urease subunit beta (Actinobacillus pleuropneumoniae serotype 7 (strain AP76)).